The sequence spans 340 residues: MKNWLNSDLKDNDIVITTRIRLARNIKGIPFPDKLSDDEGRDVVKKIKDTLIVSNDGKENFTCIDLWKNDNNCNAEYLEKHLISKKLIENYNRSAFILNKDETISVMVNEEDHLRLQAITAGLNLEEAYECIDRIDDKIEENLDYAFDEKIGYLTACPTNIGTGMRASVMIHLPALSMNNEMPRILNALSQIGITIRGLWGEGSKAIGSLYQISNQITLGMSENDIISNLKTVVEQIINQENLSREQLMKKYKYELEDKIARSLGILKNSVILDSNECLNLISNVRMGVEIGIINDISKKSLNNLLVNTQRATLQEIYNKELSKKEENIKRALYVRENLR.

In terms of domain architecture, Phosphagen kinase C-terminal spans 14-244; sequence IVITTRIRLA…EQIINQENLS (231 aa). Residues 17-21, histidine 81, arginine 115, 166-170, and 197-202 contribute to the ATP site; these read TTRIR, RASVM, and RGLWGE.

This sequence belongs to the ATP:guanido phosphotransferase family.

It carries out the reaction L-arginyl-[protein] + ATP = N(omega)-phospho-L-arginyl-[protein] + ADP + H(+). In terms of biological role, catalyzes the specific phosphorylation of arginine residues in proteins. The protein is Protein-arginine kinase of Clostridium acetobutylicum (strain ATCC 824 / DSM 792 / JCM 1419 / IAM 19013 / LMG 5710 / NBRC 13948 / NRRL B-527 / VKM B-1787 / 2291 / W).